A 190-amino-acid polypeptide reads, in one-letter code: MSGLRPAISTFIFLLLITGGVYPLLTTVLGQWWFPWQANGSLIREGDTVRGSALIGQNFTDNGYFQGRPSATAEMPYNPQASGGSNLAVSNPELDKQIAARVAALRAANPDTSTSVPAELVTASASGLDNNITPQAAAWQIPRVAKARNLSVEQLTQLIAKYSQQPLVKYIGQPVVNIVELNLALDKLDE.

The helical transmembrane segment at 10 to 30 threads the bilayer; that stretch reads TFIFLLLITGGVYPLLTTVLG.

The protein belongs to the KdpC family. In terms of assembly, the system is composed of three essential subunits: KdpA, KdpB and KdpC.

It is found in the cell inner membrane. Part of the high-affinity ATP-driven potassium transport (or Kdp) system, which catalyzes the hydrolysis of ATP coupled with the electrogenic transport of potassium into the cytoplasm. This subunit acts as a catalytic chaperone that increases the ATP-binding affinity of the ATP-hydrolyzing subunit KdpB by the formation of a transient KdpB/KdpC/ATP ternary complex. This is Potassium-transporting ATPase KdpC subunit from Shigella dysenteriae serotype 1 (strain Sd197).